The chain runs to 137 residues: Putative pre-16S rRNA nuclease (137 aa).

The protein belongs to the YqgF nuclease family.

The protein localises to the cytoplasm. In terms of biological role, could be a nuclease involved in processing of the 5'-end of pre-16S rRNA. This chain is Putative pre-16S rRNA nuclease, found in Anaeromyxobacter sp. (strain Fw109-5).